A 113-amino-acid polypeptide reads, in one-letter code: Small ribosomal subunit protein bS18 (113 aa).

Residues 1–41 (MSEEKIVNTEAAPEAVAERPARAERSERPERPAKGPFGKKR) form a disordered region. A compositionally biased stretch (basic and acidic residues) spans 16–33 (VAERPARAERSERPERPA).

The protein belongs to the bacterial ribosomal protein bS18 family. As to quaternary structure, part of the 30S ribosomal subunit. Forms a tight heterodimer with protein bS6.

In terms of biological role, binds as a heterodimer with protein bS6 to the central domain of the 16S rRNA, where it helps stabilize the platform of the 30S subunit. In Elusimicrobium minutum (strain Pei191), this protein is Small ribosomal subunit protein bS18.